Reading from the N-terminus, the 508-residue chain is ATP synthase subunit alpha, chloroplastic (508 aa).

170 to 177 (GDRQTGKT) provides a ligand contact to ATP.

The protein belongs to the ATPase alpha/beta chains family. In terms of assembly, F-type ATPases have 2 components, CF(1) - the catalytic core - and CF(0) - the membrane proton channel. CF(1) has five subunits: alpha(3), beta(3), gamma(1), delta(1), epsilon(1). CF(0) has four main subunits: a, b, b' and c.

The protein resides in the plastid. It is found in the chloroplast thylakoid membrane. It catalyses the reaction ATP + H2O + 4 H(+)(in) = ADP + phosphate + 5 H(+)(out). Produces ATP from ADP in the presence of a proton gradient across the membrane. The alpha chain is a regulatory subunit. This Helianthus annuus (Common sunflower) protein is ATP synthase subunit alpha, chloroplastic.